The sequence spans 546 residues: MSLSALHKYRLQYKPVLPKHIADIDNITIEEGAKTQSAVNQKELSELFKHTYGLPICNIVAGKNADIHRVIRCGFILSGGPAAGGHNVVAGLFDGLMKGNKENKLYGFRCGAGGILSNDYIEITAELVDKHRNTGGFDLVGSGRTKIETEEQFATAFKHITALKLNAMVVVGGDDSNTNAALLAEYFAAHGSDCVFVGVPKTIDGDLKNQYIETSFGFDTACKTYSELIGNIQRDAISSRKYWHFIKVMGRSASHIALEAALETQPTYCIISEEVEDKKMTVSQIASEIADIVIERHKKGLNFGVVLIPEGLVEFIPEVKALIKELNNLLAHKKEEYSKITEFSAQKAFVCENISESCAATFKNLPDNIAKQLLLDRDPHGNVNVSAIETESFVSGIVKAEIVKRGIKVPFTPVHHFFGYEGRCAFPSNFDSTYCYALGYTAFILLALKKTGQICCISGLQKPAEEWICGGVPLTIMMNMEQRNGEMKPVIKKALVEIEGKPFKFYQSKRAQWASAEDFVFPGAIQYFGPSEVCDQPTKTLLLEQN.

A diphosphate-binding site is contributed by Gly-80. A Mg(2+)-binding site is contributed by Asp-174. Substrate contacts are provided by residues 202–204, 241–242, 249–251, Glu-310, and 420–423; these read TID, KY, MGR, and YEGR. Residue Asp-204 is the Proton acceptor of the active site.

This sequence belongs to the phosphofructokinase type A (PFKA) family. PPi-dependent PFK group II subfamily. Clade 'Long' sub-subfamily. In terms of assembly, homodimer. It depends on Mg(2+) as a cofactor. The cofactor is Mn(2+).

The protein resides in the cytoplasm. The catalysed reaction is beta-D-fructose 6-phosphate + diphosphate = beta-D-fructose 1,6-bisphosphate + phosphate + H(+). It functions in the pathway carbohydrate degradation; glycolysis; D-glyceraldehyde 3-phosphate and glycerone phosphate from D-glucose: step 3/4. With respect to regulation, non-allosteric. Competitively inhibited by PPi, Pi and fructose 1,6-bisphosphate. Catalyzes the phosphorylation of D-fructose 6-phosphate, the first committing step of glycolysis. Uses inorganic phosphate (PPi) as phosphoryl donor instead of ATP like common ATP-dependent phosphofructokinases (ATP-PFKs), which renders the reaction reversible, and can thus function both in glycolysis and gluconeogenesis. Consistently, PPi-PFK can replace the enzymes of both the forward (ATP-PFK) and reverse (fructose-bisphosphatase (FBPase)) reactions. The polypeptide is Pyrophosphate--fructose 6-phosphate 1-phosphotransferase (Entamoeba histolytica (strain ATCC 30459 / HM-1:IMSS / ABRM)).